Reading from the N-terminus, the 212-residue chain is Transcriptional regulator GfcR (212 aa).

It belongs to the purine/pyrimidine phosphoribosyltransferase family. GfcR subfamily.

DNA-binding transcriptional regulator that functions as a regulator of central sugar catabolic pathways. The protein is Transcriptional regulator GfcR of Halobacterium salinarum (strain ATCC 29341 / DSM 671 / R1).